The primary structure comprises 872 residues: MKNLSSAQIRQMWLDFWKSKGHSVEPSANLVPVNDPTLLWINSGVATLKKYFDGSVIPDNPRITNAQKSIRTNDIENVGKTARHHTMFEMLGNFSIGDYFRDEAIEWGFELLTSPEWFAFPKDKLYMTYYPDDMDSYNRWIALGVEPSHLIPLEDNFWEIGAGPSGPDTEIFFDRGTDFDPENIGIRLLEEDIENDRYIEIWNIVLSQFNADPAVPRSEYKELPNKNIDTGAGLERLAAIFQGAKTNFETDLFLPIIREVEKISGKTYDQDGDNMSFKVIADHIRALSFAIGDGALPGNEGRGYVLRRLLRRASMHGQRLGITEPFLYKLVETVGNIMESYYPEVLEKRAFIEKIVKSEEESFARTIHTGSQFAEQLMDKLAAEGKSEIDGRDIFKLYDTYGFQVELTEELAEHRGMTLDIAGFEAAMKEQQDRARASVVKGGSMGMQNETLAAITEESTFVYGQTALEASLSVIVADNARTEAVSEGQALLVFDQTPFYAEMGGQVADHGFVKNATGDIVATVIDVQKAPNGQPLHTVELSASISVGQTYTLEIETKRRKGVEKNHTATHLLHAALHNIIGEHATQAGSLNEQDFLRFDFTHFEAVTAEELRRIEEEVNEQIWNAIPVVTVETDIDTAKEMGAMALFGEKYGKEVRVVTIGDYSVELCGGTHVGNTAEIGIFKILKEEGIGSGTRRIIAVTGREAFLAYRDQEDALKEVAATIKSPQIKEVPNKVESLAQQVRDLQKENAALKEKAAAAAAGDVFKNVKDANGIRYIASQVQVSDAGALRTFADNWKQKDYSDVLVLVAAIGDKVNVLVASKSSDVHAGNLIKVLAPIVAGRGGGKPDMAMAGGSDASAIQTLLNSVANNL.

Zn(2+)-binding residues include His567, His571, Cys669, and His673.

Belongs to the class-II aminoacyl-tRNA synthetase family. The cofactor is Zn(2+).

The protein resides in the cytoplasm. It carries out the reaction tRNA(Ala) + L-alanine + ATP = L-alanyl-tRNA(Ala) + AMP + diphosphate. Catalyzes the attachment of alanine to tRNA(Ala) in a two-step reaction: alanine is first activated by ATP to form Ala-AMP and then transferred to the acceptor end of tRNA(Ala). Also edits incorrectly charged Ser-tRNA(Ala) and Gly-tRNA(Ala) via its editing domain. This chain is Alanine--tRNA ligase, found in Streptococcus suis (strain 98HAH33).